A 366-amino-acid chain; its full sequence is tRNA/tmRNA (uracil-C(5))-methyltransferase (366 aa).

The S-adenosyl-L-methionine site is built by Q190, Y218, N223, E239, and D299. The active-site Nucleophile is the C324. E358 functions as the Proton acceptor in the catalytic mechanism.

This sequence belongs to the class I-like SAM-binding methyltransferase superfamily. RNA M5U methyltransferase family. TrmA subfamily.

It catalyses the reaction uridine(54) in tRNA + S-adenosyl-L-methionine = 5-methyluridine(54) in tRNA + S-adenosyl-L-homocysteine + H(+). The catalysed reaction is uridine(341) in tmRNA + S-adenosyl-L-methionine = 5-methyluridine(341) in tmRNA + S-adenosyl-L-homocysteine + H(+). Its function is as follows. Dual-specificity methyltransferase that catalyzes the formation of 5-methyluridine at position 54 (m5U54) in all tRNAs, and that of position 341 (m5U341) in tmRNA (transfer-mRNA). This chain is tRNA/tmRNA (uracil-C(5))-methyltransferase, found in Edwardsiella ictaluri (strain 93-146).